A 383-amino-acid polypeptide reads, in one-letter code: Delta(12)-fatty-acid desaturase (383 aa).

The disordered stretch occupies residues 1-24 (MGAGGRMPVPTSSKKSETDTTKRV). Residues 14–24 (KKSETDTTKRV) show a composition bias toward basic and acidic residues. A helical membrane pass occupies residues 56–76 (LISDIIIASCFYYVATNYFSL). The short motif at 105-109 (HECGH) is the Histidine box-1 element. A helical transmembrane segment spans residues 117–137 (WLDDTVGLIFHSFLLVPYFSW). The short motif at 141 to 145 (HRRHH) is the Histidine box-2 element. Transmembrane regions (helical) follow at residues 179-199 (IMML…FNVS), 225-245 (IYLS…YAAA), and 252-272 (ICLY…ITYL). Residues 315–319 (HVAHH) carry the Histidine box-3 motif.

It belongs to the fatty acid desaturase type 1 family. In terms of assembly, homo- and heterodimer. Interacts with FAD3 but not with FAD6. FAD2-FAD3 heterodimers can form a metabolic channel in which 18:1-PC is converted to 18:3-PC without releasing a free 18:2-PC intermediate. Expressed in shoots and roots. Expressed in leaves, stems, flowers and siliques.

The protein localises to the endoplasmic reticulum membrane. It localises to the microsome membrane. It catalyses the reaction (9Z)-octadecenoyl-CoA + 2 Fe(II)-[cytochrome b5] + O2 + 2 H(+) = (9Z,12Z)-octadecadienoyl-CoA + 2 Fe(III)-[cytochrome b5] + 2 H2O. The enzyme catalyses (9Z)-hexadecenoyl-CoA + 2 Fe(II)-[cytochrome b5] + O2 + 2 H(+) = (9Z,12Z)-hexadecadienoyl-CoA + 2 Fe(III)-[cytochrome b5] + 2 H2O. The catalysed reaction is a (9Z)-octadecenoyl-containing glycerolipid + 2 Fe(II)-[cytochrome b5] + O2 + 2 H(+) = a (9Z,12Z)-octadecadienoyl-containing glycerolipid + 2 Fe(III)-[cytochrome b5] + 2 H2O. It carries out the reaction (9Z)-octadecenoyl-CoA + AH2 + O2 = (9Z,12Z)-octadecadienoyl-CoA + A + 2 H2O. It catalyses the reaction (9Z)-hexadecenoyl-CoA + AH2 + O2 = (9Z,12Z)-hexadecadienoyl-CoA + A + 2 H2O. The enzyme catalyses (9Z)-tetradecenoyl-CoA + 2 Fe(II)-[cytochrome b5] + O2 + 2 H(+) = (9Z,12Z)-tetradecadienoyl-CoA + 2 Fe(III)-[cytochrome b5] + 2 H2O. The catalysed reaction is (9Z)-pentadecenoyl-CoA + 2 Fe(II)-[cytochrome b5] + O2 + 2 H(+) = (9Z,12Z)-pentadecadienoyl-CoA + 2 Fe(III)-[cytochrome b5] + 2 H2O. It carries out the reaction (9Z)-heptadecenoyl-CoA + 2 Fe(II)-[cytochrome b5] + O2 + 2 H(+) = (9Z,12Z)-heptadecadienoyl-CoA + 2 Fe(III)-[cytochrome b5] + 2 H2O. It functions in the pathway lipid metabolism; polyunsaturated fatty acid biosynthesis. In terms of biological role, ER (microsomal) omega-6 fatty acid desaturase introduces the second double bond in the biosynthesis of 18:3 fatty acids, important constituents of plant membranes. Delta(12)-desaturase with regioselectivity determined by the double bond (delta(9) position) and carboxyl group of the substrate. Can use both 16:1 and 18:1 fatty acids as substrates. It is thought to use cytochrome b5 as an electron donor and to act on fatty acids esterified to phosphatidylcholine (PC) and, possibly, other phospholipids. Very low constitutive hydroxylation activity. Required for desaturation of fatty acids present in extraplastidial membranes, including mitochondria. Required for salt tolerance during seed germination and early seedling growth. The chain is Delta(12)-fatty-acid desaturase from Arabidopsis thaliana (Mouse-ear cress).